A 68-amino-acid polypeptide reads, in one-letter code: Wasabi receptor toxin (68 aa).

The signal sequence occupies residues 1 to 21; that stretch reads MKYFTLALTLLFLLLINPCKD. Residues 22–35 constitute a propeptide that is removed on maturation; that stretch reads MNFAWAESSEKVER. 2 disulfide bridges follow: cysteine 44–cysteine 62 and cysteine 48–cysteine 58.

The protein belongs to the short scorpion toxin superfamily. Potassium channel inhibitor kappa-KTx family. Kappa-KTx 1 subfamily. Monomer. In terms of tissue distribution, expressed by the venom gland.

Its subcellular location is the secreted. The protein resides in the host cytoplasm. Its function is as follows. Cell-penetrating peptide (CPP) with defensive purpose that induces pain by specifically activating mammalian sensory neuron TRPA1 channels. It non-covalently binds to the same region than other TRPA1 agonists (irritants), but acts via a distinct biochemical mechanism. Its binding stabilizes the TRPA1 open state and diminishes calcium-permeability. Consequently, it produces pain and pain hypersensitivity, but fails to trigger efferent release of neuropeptides (CGRP) and neurogenic inflammation typically produced by noxious electrophiles. Is not active on voltage-gated potassium channels and other TRP channels. In Urodacus manicatus (Black rock scorpion), this protein is Wasabi receptor toxin.